Here is a 146-residue protein sequence, read N- to C-terminus: Basic phospholipase A2 beta-bungarotoxin A1 chain (146 aa).

The first 19 residues, 1–19, serve as a signal peptide directing secretion; that stretch reads MNPAHLLVLPAVCVSFLGA. Residues 20–27 constitute a propeptide that is removed on maturation; the sequence is SIIPPQSL. 6 disulfide bridges follow: Cys-54-Cys-145, Cys-56-Cys-72, Cys-71-Cys-126, Cys-78-Cys-119, Cys-87-Cys-112, and Cys-105-Cys-117. Ca(2+) is bound by residues Tyr-55, Gly-57, and Gly-59. Residue His-75 is part of the active site. Position 76 (Asp-76) interacts with Ca(2+). Asp-120 is an active-site residue.

Belongs to the phospholipase A2 family. Group I subfamily. D49 sub-subfamily. Heterodimer with beta-bungarotoxin B chain; disulfide-linked. The A chain has phospholipase A2 activity and the B chain shows homology with the basic protease inhibitors. Requires Ca(2+) as cofactor. In terms of tissue distribution, expressed by the venom gland.

The protein resides in the secreted. The enzyme catalyses a 1,2-diacyl-sn-glycero-3-phosphocholine + H2O = a 1-acyl-sn-glycero-3-phosphocholine + a fatty acid + H(+). In terms of biological role, snake venom phospholipase A2 (PLA2) that inhibits neuromuscular transmission by blocking acetylcholine release from the nerve termini. PLA2 catalyzes the calcium-dependent hydrolysis of the 2-acyl groups in 3-sn-phosphoglycerides. This chain is Basic phospholipase A2 beta-bungarotoxin A1 chain, found in Bungarus flaviceps flaviceps (Red-headed krait).